Here is a 368-residue protein sequence, read N- to C-terminus: MSESQKKVIVGMSGGVDSSVSAYLLLQQGYKVEGLFMKNWEEDDGEEYCTAAADLADAQAVCDKLGIELHTVNFAAEYWDNVFELFLEEYKAGRTPNPDILCNKEIKFKAFLEFAAEDLGADYIATGHYVRRADVDGKSQLLRGLDGNKDQSYFLYTLSHEQIAQSLFPVGELEKPQVRKIAEELDLITAKKKDSTGICFIGERKFRDFLGRYLPAQPGKILTVDGEEIGTHQGLMYHTLGQRKGLGIGGTKEGSEDPWYVVDKDVENNILIVAQGHDHPRLMSVGLIAQQLHWVNREPLQGTLRCTVKTRYRQTDIPCTVTALDEDRIEVRFDEPVAAVTPGQSAVFYLGEVCLGGGIIEQRLPLQS.

Residues 11-18 and Met37 contribute to the ATP site; that span reads GMSGGVDS. An interaction with target base in tRNA region spans residues 97–99; that stretch reads NPD. Catalysis depends on Cys102, which acts as the Nucleophile. An intrachain disulfide couples Cys102 to Cys199. Gly127 is an ATP binding site. The tract at residues 149-151 is interaction with tRNA; the sequence is KDQ. Cys199 serves as the catalytic Cysteine persulfide intermediate. The tract at residues 311-312 is interaction with tRNA; it reads RY.

It belongs to the MnmA/TRMU family. Interacts with TusE.

The protein localises to the cytoplasm. The catalysed reaction is S-sulfanyl-L-cysteinyl-[protein] + uridine(34) in tRNA + AH2 + ATP = 2-thiouridine(34) in tRNA + L-cysteinyl-[protein] + A + AMP + diphosphate + H(+). Functionally, catalyzes the 2-thiolation of uridine at the wobble position (U34) of tRNA(Lys), tRNA(Glu) and tRNA(Gln), leading to the formation of s(2)U34, the first step of tRNA-mnm(5)s(2)U34 synthesis. Sulfur is provided by IscS, via a sulfur-relay system. Binds ATP and its substrate tRNAs. In Klebsiella pneumoniae subsp. pneumoniae (strain ATCC 700721 / MGH 78578), this protein is tRNA-specific 2-thiouridylase MnmA.